A 625-amino-acid chain; its full sequence is DELLA protein SLR1 (625 aa).

Residues 1–34 (MKREYQEAGGSSGGGSSADMGSCKDKVMAGAAGE) form a disordered region. Residues 39–43 (DELLA) carry the DELLA motif motif. The disordered stretch occupies residues 167–209 (TADPSAADSARDTKRMRTGGGSTSSSSSSSSSLGGGASRGSVV). A compositionally biased stretch (low complexity) spans 189-198 (TSSSSSSSSS). Residues 232–621 (VDTQEAGIRL…RPLIATSAWR (390 aa)) enclose the GRAS domain. Positions 239-294 (IRLVHALLACAEAVQQENFAAAEALVKQIPTLAASQGGAMRKVAAYFGEALARRVY) are leucine repeat I (LRI). A required for possible homodimerization region spans residues 241–278 (LVHALLACAEAVQQENFAAAEALVKQIPTLAASQGGAM). Positions 246–250 (LACAE) match the LxCxE motif motif. Positions 313-378 (HAHFYESCPY…GGPPSFRLTG (66 aa)) are VHIID. Residues 344 to 348 (VHVVD) carry the VHIID motif. Residues 392–431 (QVGWKLAQFAHTIRVDFQYRGLVAATLADLEPFMLQPEGE) are leucine repeat II (LRII). The PFYRE stretch occupies residues 441-542 (IAVNSVFELH…EVYLGRQICN (102 aa)). The LXXLL motif signature appears at 449–453 (LHRLL). The SAW stretch occupies residues 545–621 (ACEGAERTER…RPLIATSAWR (77 aa)).

The protein belongs to the GRAS family. DELLA subfamily. In terms of assembly, may be a homodimer. Interacts directly with the GID2 component of the SCF(GID2) complex. Interacts with GID1 in a GA-dependent manner, probably leading to its interaction with GID2 and its subsequent degradation. Interacts with D14 and GID1 in an strigolactone-dependent manner. Interacts with HD16/EL1. Post-translationally, phosphorylated on Ser/Thr residues in the N-terminal part. Both phosphorylated and unphosphorylated forms are degraded upon GA treatment, suggesting that phosphorylation does not trigger ubiquitination. Phosphorylated by HD16/EL1. Phosphorylation enhances its stability. Ubiquitinated. Upon GA application it is ubiquitinated by the SCF(GID2) complex, leading to its subsequent degradation. As to expression, expressed in nodes, internodes, leaf sheats of young seedlings and ears of adult plants. Weakly expressed in leaf blade and root.

The protein resides in the nucleus. Functionally, probable transcriptional regulator that acts as a repressor of the gibberellin (GA) signaling pathway. Probably acts by participating in large multiprotein complexes that repress transcription of GA-inducible genes. Upon GA application, it is degraded by the proteasome, allowing the GA signaling pathway. In contrast, its overexpression prevents the GA signaling pathway and induces a dwarf phenotype. This is DELLA protein SLR1 from Oryza sativa subsp. japonica (Rice).